The sequence spans 88 residues: Yop proteins translocation protein S (88 aa).

Transmembrane regions (helical) follow at residues 15 to 35 and 49 to 69; these read WLVL…GTLV and LGFV…ASWL.

The protein belongs to the FliQ/MopD/SpaQ family.

The protein localises to the cell membrane. Component of the Yop secretion machinery. In Yersinia pestis, this protein is Yop proteins translocation protein S (yscS).